A 555-amino-acid polypeptide reads, in one-letter code: Energy-dependent translational throttle protein EttA (555 aa).

ABC transporter domains follow at residues 6-259 and 324-550; these read YTMH…AQEA and LEVS…RIKY. 39–46 is an ATP binding site; sequence GLNGAGKS. The tract at residues 95–139 is arm; sequence SEVVNALKRLDEVYALYADPDADFDKLAAEQGRLEEIIQAHDGHN. The tract at residues 242 to 322 is ptIM; that stretch reads GNYSSWLEQK…IPPGPRLGDK (81 aa). 356 to 363 is an ATP binding site; the sequence is GPNGAGKS.

The protein belongs to the ABC transporter superfamily. ABCF family. Translational throttle EttA subfamily. Monomer. Probably contacts ribosomal proteins L1, L5, L33 and S7, the 16S and 23S rRNA and the P-site containing tRNA(fMet).

The protein localises to the cytoplasm. It catalyses the reaction ATP + H2O = ADP + phosphate + H(+). A translation factor that gates the progression of the 70S ribosomal initiation complex (IC, containing tRNA(fMet) in the P-site) into the translation elongation cycle by using a mechanism sensitive to the ATP/ADP ratio. Binds to the 70S ribosome E-site where it modulates the state of the translating ribosome during subunit translocation. ATP hydrolysis probably frees it from the ribosome, which can enter the elongation phase. The protein is Energy-dependent translational throttle protein EttA of Escherichia coli O157:H7.